The following is a 137-amino-acid chain: Large ribosomal subunit protein uL16c (137 aa).

The protein belongs to the universal ribosomal protein uL16 family. As to quaternary structure, part of the 50S ribosomal subunit.

The protein resides in the plastid. Its subcellular location is the chloroplast. This Adiantum capillus-veneris (Maidenhair fern) protein is Large ribosomal subunit protein uL16c.